The primary structure comprises 430 residues: Glutamate-1-semialdehyde 2,1-aminomutase 2 (430 aa).

K269 is subject to N6-(pyridoxal phosphate)lysine.

Belongs to the class-III pyridoxal-phosphate-dependent aminotransferase family. HemL subfamily. In terms of assembly, homodimer. Requires pyridoxal 5'-phosphate as cofactor.

The protein localises to the cytoplasm. The enzyme catalyses (S)-4-amino-5-oxopentanoate = 5-aminolevulinate. It participates in porphyrin-containing compound metabolism; protoporphyrin-IX biosynthesis; 5-aminolevulinate from L-glutamyl-tRNA(Glu): step 2/2. The chain is Glutamate-1-semialdehyde 2,1-aminomutase 2 from Lysinibacillus sphaericus (strain C3-41).